The sequence spans 74 residues: Mitochondrial import receptor subunit TOM6 homolog (74 aa).

Residues 1-16 (MASSTVPVSAAGSANE) are compositionally biased toward polar residues. The tract at residues 1-22 (MASSTVPVSAAGSANETPEIPD) is disordered. A2 bears the N-acetylalanine mark.

This sequence belongs to the Tom6 family. Forms part of the preprotein translocase complex of the outer mitochondrial membrane (TOM complex) which consists of at least 7 different proteins (TOMM5, TOMM6, TOMM7, TOMM20, TOMM22, TOMM40 and TOMM70).

It localises to the mitochondrion outer membrane. This is Mitochondrial import receptor subunit TOM6 homolog (TOMM6) from Homo sapiens (Human).